Consider the following 457-residue polypeptide: Tubulin beta chain (457 aa).

Residues glutamine 11, glutamate 69, serine 138, glycine 142, threonine 143, glycine 144, asparagine 204, and asparagine 226 each contribute to the GTP site. Residue glutamate 69 participates in Mg(2+) binding. A disordered region spans residues 431–457 (EGEEEEDAYAEGAVVNGDQSYEDQYAA).

Belongs to the tubulin family. Dimer of alpha and beta chains. A typical microtubule is a hollow water-filled tube with an outer diameter of 25 nm and an inner diameter of 15 nM. Alpha-beta heterodimers associate head-to-tail to form protofilaments running lengthwise along the microtubule wall with the beta-tubulin subunit facing the microtubule plus end conferring a structural polarity. Microtubules usually have 13 protofilaments but different protofilament numbers can be found in some organisms and specialized cells. It depends on Mg(2+) as a cofactor.

The protein localises to the cytoplasm. Its subcellular location is the cytoskeleton. Tubulin is the major constituent of microtubules, a cylinder consisting of laterally associated linear protofilaments composed of alpha- and beta-tubulin heterodimers. Microtubules grow by the addition of GTP-tubulin dimers to the microtubule end, where a stabilizing cap forms. Below the cap, tubulin dimers are in GDP-bound state, owing to GTPase activity of alpha-tubulin. The chain is Tubulin beta chain (TUBB1) from Porphyra purpurea (Red seaweed).